The sequence spans 23 residues: Conolysin-Mt1 (23 aa).

A Serine amide modification is found at serine 22.

Expressed by the venom duct.

It localises to the secreted. In terms of biological role, this cytolytic peptide has ability to disrupt the integrity of cell membranes from both prokaryotes and eukaryotes. It permeabilizes both negatively charged prokaryotic (PE:PG) and zwitterionic eukaryotic (PC:cholesterol) model membranes. It has potent hemolytic activity on human erythrocytes and exhibits low antimicrobial activity against the Gram-negative bacterium E.coli (MIC&gt;50 uM) and the Gram-positive bacterium S.aureus (MIC=25-50 uM). Intracranial injection causes mice to shuffle backward until the encounter an obstacle, at which time the mouse jump into the air. The backward shuffle is reminiscent to the signature dance 'moonwalk' that gained widespread popularity after being performed by Michael Jackson. The sequence is that of Conolysin-Mt1 from Conus mustelinus (Weasel cone).